The chain runs to 213 residues: MANKFTREYKLVVVGGGGVGKSCLTIQLIQGHFLDEYDPTIEDSYRKQCTIDNEVALLDILDTAGQEEYSAMREQYMRTGEGFLLVFAINSRESFEEIRIYQQQILRVKDRDSFPMIIVGNKYDLRGERVVSEQEGQALAAEFGTKYIETSAKTQHNVENAFYDLVREIRKEDKKLGEKVGGTSFANNNGAVKQMDVGDEDVQAGCCAKCIMM.

15–22 contributes to the GTP binding site; it reads GGGGVGKS. Positions 37–45 match the Effector region motif; it reads YDPTIEDSY. Residues 62 to 66 and 121 to 124 contribute to the GTP site; these read DTAGQ and NKYD. Residue cysteine 210 is modified to Cysteine methyl ester. Residue cysteine 210 is the site of S-farnesyl cysteine attachment. Residues 211–213 constitute a propeptide, removed in mature form; that stretch reads IMM.

The protein belongs to the small GTPase superfamily. Ras family.

It is found in the cell membrane. The catalysed reaction is GTP + H2O = GDP + phosphate + H(+). Functionally, ras proteins bind GDP/GTP and possess intrinsic GTPase activity. The protein is Protein ras-1 (ras-1) of Neurospora crassa (strain ATCC 24698 / 74-OR23-1A / CBS 708.71 / DSM 1257 / FGSC 987).